Reading from the N-terminus, the 314-residue chain is Ribosomal RNA small subunit methyltransferase H (314 aa).

Residues 32 to 34 (GGH), Asp-52, Phe-79, Asp-100, and Gln-107 contribute to the S-adenosyl-L-methionine site.

It belongs to the methyltransferase superfamily. RsmH family.

It localises to the cytoplasm. It carries out the reaction cytidine(1402) in 16S rRNA + S-adenosyl-L-methionine = N(4)-methylcytidine(1402) in 16S rRNA + S-adenosyl-L-homocysteine + H(+). Its function is as follows. Specifically methylates the N4 position of cytidine in position 1402 (C1402) of 16S rRNA. This is Ribosomal RNA small subunit methyltransferase H from Shouchella clausii (strain KSM-K16) (Alkalihalobacillus clausii).